Here is a 371-residue protein sequence, read N- to C-terminus: 4-hydroxy-3-methylbut-2-en-1-yl diphosphate synthase (flavodoxin) (371 aa).

Residues C271, C274, C306, and E313 each coordinate [4Fe-4S] cluster.

This sequence belongs to the IspG family. [4Fe-4S] cluster serves as cofactor.

The enzyme catalyses (2E)-4-hydroxy-3-methylbut-2-enyl diphosphate + oxidized [flavodoxin] + H2O + 2 H(+) = 2-C-methyl-D-erythritol 2,4-cyclic diphosphate + reduced [flavodoxin]. The protein operates within isoprenoid biosynthesis; isopentenyl diphosphate biosynthesis via DXP pathway; isopentenyl diphosphate from 1-deoxy-D-xylulose 5-phosphate: step 5/6. Its function is as follows. Converts 2C-methyl-D-erythritol 2,4-cyclodiphosphate (ME-2,4cPP) into 1-hydroxy-2-methyl-2-(E)-butenyl 4-diphosphate. This Actinobacillus succinogenes (strain ATCC 55618 / DSM 22257 / CCUG 43843 / 130Z) protein is 4-hydroxy-3-methylbut-2-en-1-yl diphosphate synthase (flavodoxin).